Here is a 91-residue protein sequence, read N- to C-terminus: Cell division topological specificity factor (91 aa).

Belongs to the MinE family.

Functionally, prevents the cell division inhibition by proteins MinC and MinD at internal division sites while permitting inhibition at polar sites. This ensures cell division at the proper site by restricting the formation of a division septum at the midpoint of the long axis of the cell. The polypeptide is Cell division topological specificity factor (Caldanaerobacter subterraneus subsp. tengcongensis (strain DSM 15242 / JCM 11007 / NBRC 100824 / MB4) (Thermoanaerobacter tengcongensis)).